Here is a 181-residue protein sequence, read N- to C-terminus: uncharacterized protein (181 aa).

This is an uncharacterized protein from Escherichia coli (strain K12).